The sequence spans 562 residues: Urocanate hydratase (562 aa).

Residues 52-53 (GG), Q130, 176-178 (GMG), E196, R201, 242-243 (NA), 263-267 (QTSAH), 273-274 (YL), and Y322 each bind NAD(+). C410 is an active-site residue. G492 is an NAD(+) binding site.

It belongs to the urocanase family. NAD(+) serves as cofactor.

It is found in the cytoplasm. The catalysed reaction is 4-imidazolone-5-propanoate = trans-urocanate + H2O. It functions in the pathway amino-acid degradation; L-histidine degradation into L-glutamate; N-formimidoyl-L-glutamate from L-histidine: step 2/3. In terms of biological role, catalyzes the conversion of urocanate to 4-imidazolone-5-propionate. This is Urocanate hydratase from Shewanella pealeana (strain ATCC 700345 / ANG-SQ1).